Consider the following 221-residue polypeptide: Small ribosomal subunit protein uS5 (221 aa).

An S5 DRBM domain is found at 46–109; that stretch reads LKDEVIDIKR…INAKLNIMEI (64 aa).

Belongs to the universal ribosomal protein uS5 family. Part of the 30S ribosomal subunit. Contacts protein S4.

Its function is as follows. With S4 and S12 plays an important role in translational accuracy. The sequence is that of Small ribosomal subunit protein uS5 from Thermoplasma acidophilum (strain ATCC 25905 / DSM 1728 / JCM 9062 / NBRC 15155 / AMRC-C165).